Consider the following 373-residue polypeptide: Histidinol-phosphate aminotransferase (373 aa).

An N6-(pyridoxal phosphate)lysine modification is found at K233.

The protein belongs to the class-II pyridoxal-phosphate-dependent aminotransferase family. Histidinol-phosphate aminotransferase subfamily. As to quaternary structure, homodimer. It depends on pyridoxal 5'-phosphate as a cofactor.

It catalyses the reaction L-histidinol phosphate + 2-oxoglutarate = 3-(imidazol-4-yl)-2-oxopropyl phosphate + L-glutamate. It participates in amino-acid biosynthesis; L-histidine biosynthesis; L-histidine from 5-phospho-alpha-D-ribose 1-diphosphate: step 7/9. The chain is Histidinol-phosphate aminotransferase from Nitratidesulfovibrio vulgaris (strain ATCC 29579 / DSM 644 / CCUG 34227 / NCIMB 8303 / VKM B-1760 / Hildenborough) (Desulfovibrio vulgaris).